Reading from the N-terminus, the 99-residue chain is Sm-like protein LSM7 (99 aa).

The Sm domain maps to 6 to 86 (ETVLDLAKFV…VMLVSPTDGT (81 aa)).

This sequence belongs to the snRNP Sm proteins family. Component of the heptameric LSM1-LSM7 complex that forms a seven-membered ring structure with a donut shape. The LSM subunits are arranged in the order LSM1, LSM2, LSM3, LSM6, LSM5, LSM7 and LSM4. Component of the heptameric LSM2-LSM8 complex that forms a seven-membered ring structure with a donut shape. The LSM subunits are arranged in the order LSM8, LSM2, LSM3, LSM6, LSM5, LSM7 and LSM4. LSM7 subunit interacts only with its two neighboring subunits, LSM5 and LSM4. As to expression, expressed in roots, leaves, stems, flowers and siliques.

It localises to the cytoplasm. The protein resides in the nucleus. Functionally, component of LSM protein complexes, which are involved in RNA processing. Component of the cytoplasmic LSM1-LSM7 complex which is involved in mRNA degradation by promoting decapping and leading to accurate 5'-3' mRNA decay. The cytoplasmic LSM1-LSM7 complex regulates developmental gene expression by the decapping of specific development-related transcripts. Component of the nuclear LSM2-LSM8 complex which is involved splicing nuclear mRNAs. LSM2-LSM8 binds directly to the U6 small nuclear RNAs (snRNAs) and is essential for accurate splicing of selected development-related mRNAs through the stabilization of the spliceosomal U6 snRNA. Plays a critical role in the regulation of development-related gene expression. This chain is Sm-like protein LSM7, found in Arabidopsis thaliana (Mouse-ear cress).